The primary structure comprises 472 residues: Ribulose bisphosphate carboxylase large chain 1 (472 aa).

Substrate contacts are provided by asparagine 115 and threonine 165. The Proton acceptor role is filled by lysine 167. Position 169 (lysine 169) interacts with substrate. Residues lysine 193, aspartate 195, and glutamate 196 each coordinate Mg(2+). Lysine 193 is modified (N6-carboxylysine). Catalysis depends on histidine 286, which acts as the Proton acceptor. 3 residues coordinate substrate: arginine 287, histidine 319, and serine 371.

Belongs to the RuBisCO large chain family. Type I subfamily. In terms of assembly, heterohexadecamer of 8 large chains and 8 small chains. Mg(2+) serves as cofactor.

It carries out the reaction 2 (2R)-3-phosphoglycerate + 2 H(+) = D-ribulose 1,5-bisphosphate + CO2 + H2O. The catalysed reaction is D-ribulose 1,5-bisphosphate + O2 = 2-phosphoglycolate + (2R)-3-phosphoglycerate + 2 H(+). Its function is as follows. RuBisCO catalyzes two reactions: the carboxylation of D-ribulose 1,5-bisphosphate, the primary event in carbon dioxide fixation, as well as the oxidative fragmentation of the pentose substrate. Both reactions occur simultaneously and in competition at the same active site. In Allochromatium vinosum (strain ATCC 17899 / DSM 180 / NBRC 103801 / NCIMB 10441 / D) (Chromatium vinosum), this protein is Ribulose bisphosphate carboxylase large chain 1.